A 601-amino-acid chain; its full sequence is MVSNQDNVQRNDVQKYPITRFVKRKSNVVLKKNKGAMKSNSNSRSRGNKKLKESQFSSRDNFRTTQTQASSSSEPSDNTNRLVPVVIIDNNTPKKEESNAEKLKLDKDSSSVNYENQISKPLITFSDIHETVNVPFLCLDKHDSKNEVAINSHEDSPVCLEDITGSLSSTYGNDSLGESNLEELPTSDKIKGENMGSRKKRKGFVIDSEDSDTGIPREENVTITRKTKLSSNILYSDSDTERQSDSGSKNVARQFSRIKRKRKVLSSSSEDDESSSPEDLLKPIIRSTEEMENLNELEQEVQDLDPIDEGFEEKVPRFRNPSKKAFYEKLHSLRNRSYSKLESLTSEKSDTLITKSELANESEEDDFIVDDEDTEVMMNARSLLPAEFSMTSHQGLKAHFRNFMMFIVQQAIDPIDASDISDHYLFSRRTIRKQLYSSVDSNIISSIWQSEFIKLIKTVPNMKSAKIDATYGCDACNIHTRMSTQIVYFKGMPYNEHNYKELDSFEPITKEAWMLGNSCFNRARIAHSIYHWEYKVSRHIQVELKFREASNTSEQGKNIVESIYEDLKDSNFFETTWVELCNLLKLASSSFESNFHSRSSM.

Residues 24-35 are compositionally biased toward basic residues; the sequence is RKSNVVLKKNKG. 2 disordered regions span residues 24–106 and 171–219; these read RKSN…LKLD and YGND…PREE. Residues 54 to 81 show a composition bias toward polar residues; the sequence is SQFSSRDNFRTTQTQASSSSEPSDNTNR. The segment covering 92–106 has biased composition (basic and acidic residues); the sequence is TPKKEESNAEKLKLD. Phosphoserine occurs at positions 236 and 238. The segment at 260–283 is disordered; that stretch reads RKRKVLSSSSEDDESSSPEDLLKP.

It localises to the nucleus. This is an uncharacterized protein from Schizosaccharomyces pombe (strain 972 / ATCC 24843) (Fission yeast).